The sequence spans 240 residues: Uridylate kinase (240 aa).

Position 13–16 (13–16 (KASG)) interacts with ATP. The tract at residues 21–26 (GSQGFG) is involved in allosteric activation by GTP. Residue glycine 55 coordinates UMP. ATP-binding residues include glycine 56 and arginine 60. UMP-binding positions include aspartate 75 and 136–143 (TGNPFFTT). Residues threonine 163, glutamine 164, tyrosine 169, and aspartate 172 each contribute to the ATP site.

This sequence belongs to the UMP kinase family. In terms of assembly, homohexamer.

It is found in the cytoplasm. The enzyme catalyses UMP + ATP = UDP + ADP. It functions in the pathway pyrimidine metabolism; CTP biosynthesis via de novo pathway; UDP from UMP (UMPK route): step 1/1. Its activity is regulated as follows. Allosterically activated by GTP. Inhibited by UTP. Its function is as follows. Catalyzes the reversible phosphorylation of UMP to UDP. The polypeptide is Uridylate kinase (Brucella melitensis biotype 1 (strain ATCC 23456 / CCUG 17765 / NCTC 10094 / 16M)).